A 159-amino-acid chain; its full sequence is Ribosomal RNA large subunit methyltransferase H (159 aa).

S-adenosyl-L-methionine contacts are provided by residues Leu76, Gly108, and 127–132 (FSKMTF).

It belongs to the RNA methyltransferase RlmH family. In terms of assembly, homodimer.

It localises to the cytoplasm. It carries out the reaction pseudouridine(1915) in 23S rRNA + S-adenosyl-L-methionine = N(3)-methylpseudouridine(1915) in 23S rRNA + S-adenosyl-L-homocysteine + H(+). In terms of biological role, specifically methylates the pseudouridine at position 1915 (m3Psi1915) in 23S rRNA. The polypeptide is Ribosomal RNA large subunit methyltransferase H (Bacillus velezensis (strain DSM 23117 / BGSC 10A6 / LMG 26770 / FZB42) (Bacillus amyloliquefaciens subsp. plantarum)).